The chain runs to 262 residues: E3 ubiquitin-protein ligase NEURL3 (262 aa).

Residues 17-173 (ALRFHAEAKG…TTKAIELLDP (157 aa)) enclose the NHR domain. An RING-type zinc finger spans residues 202 to 241 (CAICFYHAANTRLVPCGHTYFCRYCAWRVFSDTAKCPVCR).

In terms of assembly, (Microbial infection) Interacts with hepatitis C virus protein E1; this interaction prevents E1 interaction with E2 and subsequently inhibits viral infection.

The protein resides in the cytoplasm. It carries out the reaction S-ubiquitinyl-[E2 ubiquitin-conjugating enzyme]-L-cysteine + [acceptor protein]-L-lysine = [E2 ubiquitin-conjugating enzyme]-L-cysteine + N(6)-ubiquitinyl-[acceptor protein]-L-lysine.. It functions in the pathway protein modification; protein ubiquitination. Functionally, E3 ubiquitin-protein ligase that plays a role in various biological processes such as lung development or innate immunity. Seems to utilize UBE2E1. Promotes innate antiviral response by catalyzing 'Lys-63'-linked ubiquitination of IRF7. Also inhibits hepatitis C virus assembly by directly binding to viral E1 envelope glycoprotein to disrupt its interaction with E2. Plays an essential role in TLR4-mediated activation of MAPK pathways by promoting 'Lys-48'-linked polyubiquitination of the phosphatase DUSP1/MKP1. The protein is E3 ubiquitin-protein ligase NEURL3 (NEURL3) of Homo sapiens (Human).